The chain runs to 411 residues: Formate-dependent phosphoribosylglycinamide formyltransferase (411 aa).

25-26 (EL) is a N(1)-(5-phospho-beta-D-ribosyl)glycinamide binding site. ATP is bound by residues R118, K159, 164-169 (SSGAGQ), 199-202 (EQYI), and E207. Residues 123–318 (TFAHDKLGLP…EFDLHARAIL (196 aa)) enclose the ATP-grasp domain. Mg(2+)-binding residues include E277 and E289. Residues D296, K366, and 373-374 (RR) each bind N(1)-(5-phospho-beta-D-ribosyl)glycinamide.

This sequence belongs to the PurK/PurT family. As to quaternary structure, homodimer.

The enzyme catalyses N(1)-(5-phospho-beta-D-ribosyl)glycinamide + formate + ATP = N(2)-formyl-N(1)-(5-phospho-beta-D-ribosyl)glycinamide + ADP + phosphate + H(+). Its pathway is purine metabolism; IMP biosynthesis via de novo pathway; N(2)-formyl-N(1)-(5-phospho-D-ribosyl)glycinamide from N(1)-(5-phospho-D-ribosyl)glycinamide (formate route): step 1/1. Functionally, involved in the de novo purine biosynthesis. Catalyzes the transfer of formate to 5-phospho-ribosyl-glycinamide (GAR), producing 5-phospho-ribosyl-N-formylglycinamide (FGAR). Formate is provided by PurU via hydrolysis of 10-formyl-tetrahydrofolate. This chain is Formate-dependent phosphoribosylglycinamide formyltransferase, found in Corynebacterium jeikeium (strain K411).